Reading from the N-terminus, the 408-residue chain is LL-diaminopimelate aminotransferase (408 aa).

2 residues coordinate substrate: Tyr15 and Gly42. Pyridoxal 5'-phosphate-binding positions include Tyr72, Ser108–Lys109, Tyr132, Asn187, Tyr218, and Ser246–Ser248. Substrate is bound by residues Lys109, Tyr132, and Asn187. Lys249 carries the N6-(pyridoxal phosphate)lysine modification. Pyridoxal 5'-phosphate is bound by residues Arg257 and Asn292. Substrate is bound by residues Asn292 and Arg388.

It belongs to the class-I pyridoxal-phosphate-dependent aminotransferase family. LL-diaminopimelate aminotransferase subfamily. As to quaternary structure, homodimer. Requires pyridoxal 5'-phosphate as cofactor.

It carries out the reaction (2S,6S)-2,6-diaminopimelate + 2-oxoglutarate = (S)-2,3,4,5-tetrahydrodipicolinate + L-glutamate + H2O + H(+). It participates in amino-acid biosynthesis; L-lysine biosynthesis via DAP pathway; LL-2,6-diaminopimelate from (S)-tetrahydrodipicolinate (aminotransferase route): step 1/1. In terms of biological role, involved in the synthesis of meso-diaminopimelate (m-DAP or DL-DAP), required for both lysine and peptidoglycan biosynthesis. Catalyzes the direct conversion of tetrahydrodipicolinate to LL-diaminopimelate. The chain is LL-diaminopimelate aminotransferase from Synechococcus sp. (strain WH7803).